A 243-amino-acid polypeptide reads, in one-letter code: Tegument protein UL14 homolog (243 aa).

It belongs to the alphaherpesvirinae HHV-1 UL14 protein family. In terms of processing, phosphorylated.

The protein resides in the virion tegument. The protein localises to the host cytoplasm. It is found in the host nucleus. Contributes to the nuclear transport of the viral transcriptional activator VP16 homolog during the early phase of infection. Therefore, participates indirectly in the regulation of the immediate-early gene expression. Additionally, seems to be important for efficient nuclear targeting of capsids. In Gallid herpesvirus 2 (strain Chicken/Md5/ATCC VR-987) (GaHV-2), this protein is Tegument protein UL14 homolog (MDV026).